A 624-amino-acid polypeptide reads, in one-letter code: Bifunctional 3'-phosphoadenosine 5'-phosphosulfate synthase 1 (624 aa).

M1 carries the N-acetylmethionine modification. The interval 1 to 225 (MELPGSLCKK…VVELLQERDI (225 aa)) is adenylyl-sulfate kinase. Residue K12 is modified to N6-acetyllysine. Residue 62 to 67 (GAGKTT) coordinates ATP. Adenosine 5'-phosphosulfate is bound by residues 89 to 92 (DNIR), F101, 106 to 109 (REEN), 132 to 133 (IS), K171, and 184 to 185 (GF). ATP contacts are provided by residues C207, C212, 419–422 (QLRN), 521–525 (GRDPA), and A563. The tract at residues 234–624 (VKELYVPENK…AEYYKALEKA (391 aa)) is sulfate adenylyltransferase.

The protein in the N-terminal section; belongs to the APS kinase family. This sequence in the C-terminal section; belongs to the sulfate adenylyltransferase family. As to quaternary structure, homodimer.

The enzyme catalyses sulfate + ATP + H(+) = adenosine 5'-phosphosulfate + diphosphate. It carries out the reaction adenosine 5'-phosphosulfate + ATP = 3'-phosphoadenylyl sulfate + ADP + H(+). The protein operates within sulfur metabolism; sulfate assimilation. In terms of biological role, bifunctional enzyme with both ATP sulfurylase and APS kinase activity, which mediates two steps in the sulfate activation pathway. The first step is the transfer of a sulfate group to ATP to yield adenosine 5'-phosphosulfate (APS), and the second step is the transfer of a phosphate group from ATP to APS yielding 3'-phosphoadenylylsulfate (PAPS: activated sulfate donor used by sulfotransferase). In mammals, PAPS is the sole source of sulfate; APS appears to be only an intermediate in the sulfate-activation pathway. Required for normal biosynthesis of sulfated L-selectin ligands in endothelial cells. In Cavia porcellus (Guinea pig), this protein is Bifunctional 3'-phosphoadenosine 5'-phosphosulfate synthase 1 (PAPSS1).